Reading from the N-terminus, the 612-residue chain is Bile salt-activated lipase (612 aa).

The signal sequence occupies residues 1–20 (MGRLEVLFLGLTCCLAAACA). A disulfide bridge connects residues C84 and C100. The N-linked (GlcNAc...) asparagine glycan is linked to N207. The Acyl-ester intermediate role is filled by S214. A disulfide bridge links C266 with C277. Residues D340 and H455 each act as charge relay system in the active site. Residues 553–612 (VGDHTPPEDDSEAAPVPPTDDSQGGPVPPTDDSQTTPVPPTDNSQAGDSVEAQMPGPIGF) form a disordered region. A run of 4 repeats spans residues 556 to 566 (HTPPEDDSEAA), 567 to 577 (PVPPTDDSQGG), 578 to 588 (PVPPTDDSQTT), and 589 to 599 (PVPPTDNSQAG). Residues 556–599 (HTPPEDDSEAAPVPPTDDSQGGPVPPTDDSQTTPVPPTDNSQAG) form a 4 X 11 AA tandem repeats, O-glycosylated region region. Residues 583-599 (DDSQTTPVPPTDNSQAG) show a composition bias toward polar residues.

This sequence belongs to the type-B carboxylesterase/lipase family. As to quaternary structure, interacts with CLC. Synthesized primarily in the pancreas and then transported to the intestine.

The protein localises to the secreted. The catalysed reaction is a triacylglycerol + H2O = a diacylglycerol + a fatty acid + H(+). It catalyses the reaction 1,2,3-tri-(9Z-octadecenoyl)-glycerol + H2O = di-(9Z)-octadecenoylglycerol + (9Z)-octadecenoate + H(+). The enzyme catalyses 1,2,3-trioctanoylglycerol + H2O = dioctanoylglycerol + octanoate + H(+). It carries out the reaction a sterol ester + H2O = a sterol + a fatty acid + H(+). The catalysed reaction is cholesteryl (9Z-octadecenoate) + H2O = cholesterol + (9Z)-octadecenoate + H(+). It catalyses the reaction an acetyl ester + H2O = an aliphatic alcohol + acetate + H(+). The enzyme catalyses a butanoate ester + H2O = an aliphatic alcohol + butanoate + H(+). It carries out the reaction 9-hexadecanoyloxy-octadecanoate + H2O = 9-hydroxy-octadecanoate + hexadecanoate + H(+). The catalysed reaction is 9-(9Z-octadecenoyloxy)-octadecanoate + H2O = 9-hydroxy-octadecanoate + (9Z)-octadecenoate + H(+). It catalyses the reaction 1-hexadecanoyl-sn-glycero-3-phosphocholine + H2O = sn-glycerol 3-phosphocholine + hexadecanoate + H(+). The enzyme catalyses 12-hexadecanoyloxy-octadecanoate + H2O = 12-hydroxyoctadecanoate + hexadecanoate + H(+). It carries out the reaction 12-(9Z-octadecenoyloxy)-octadecanoate + H2O = 12-hydroxyoctadecanoate + (9Z)-octadecenoate + H(+). The catalysed reaction is 13-(9Z-octadecenoyloxy)-octadecanoate + H2O = 13-hydroxy-octadecanoate + (9Z)-octadecenoate + H(+). It catalyses the reaction 9-(9Z-hexadecenoyloxy)-octadecanoate + H2O = (9Z)-hexadecenoate + 9-hydroxy-octadecanoate + H(+). The enzyme catalyses 12-(9Z-hexadecenoyloxy)-octadecanoate + H2O = 12-hydroxyoctadecanoate + (9Z)-hexadecenoate + H(+). It carries out the reaction 13-(9Z-hexadecenoyloxy)-octadecanoate + H2O = 13-hydroxy-octadecanoate + (9Z)-hexadecenoate + H(+). The catalysed reaction is 12-octadecanoyloxy-octadecanoate + H2O = 12-hydroxyoctadecanoate + octadecanoate + H(+). It catalyses the reaction 13-octadecanoyloxy-octadecanoate + H2O = 13-hydroxy-octadecanoate + octadecanoate + H(+). The enzyme catalyses 5-(9Z-hexadecenoyloxy)-octadecanoate + H2O = 5-hydroxy-octadecanoate + (9Z)-hexadecenoate + H(+). It carries out the reaction 9-octadecanoyloxy-octadecanoate + H2O = 9-hydroxy-octadecanoate + octadecanoate + H(+). With respect to regulation, activated by bile salts such as sodium taurocholate. Its function is as follows. Catalyzes the hydrolysis of a wide range of substrates including cholesteryl esters, phospholipids, lysophospholipids, di- and tri-acylglycerols, and fatty acid esters of hydroxy fatty acids (FAHFA). Preferentially hydrolyzes FAHFAs with the ester bond further away from the carboxylate. Unsaturated FAHFAs are hydrolyzed more quickly than saturated FAHFAs. Has an essential role in the complete digestion of dietary lipids and their intestinal absorption, along with the absorption of fat-soluble vitamins. The sequence is that of Bile salt-activated lipase (Cel) from Rattus norvegicus (Rat).